Here is a 423-residue protein sequence, read N- to C-terminus: Carboxypeptidase B2 (423 aa).

The first 22 residues, 1–22 (MKLYSLGVLVATVLFCGEHAFA), serve as a signal peptide directing secretion. A propeptide spans 23–114 (FQRGQVLSAL…QTSNDTISPR (92 aa)) (activation peptide). 4 N-linked (GlcNAc...) asparagine glycosylation sites follow: Asn-44, Asn-73, Asn-85, and Asn-108. One can recognise a Peptidase M14 domain in the interval 122-419 (QYHSLNEIYS…VAVAKIASHV (298 aa)). The cysteines at positions 178 and 191 are disulfide-linked. Residues His-181 and Glu-184 each contribute to the Zn(2+) site. Substrate-binding positions include 181–184 (HARE) and Arg-239. A glycan (N-linked (GlcNAc...) asparagine) is linked at Asn-241. Cystine bridges form between Cys-250–Cys-274 and Cys-265–Cys-279. Position 256–257 (256–257 (NR)) interacts with substrate. Zn(2+) is bound at residue His-310. Substrate is bound by residues 311 to 312 (SY) and Tyr-363. The Proton donor/acceptor role is filled by Glu-385.

Belongs to the peptidase M14 family. Requires Zn(2+) as cofactor.

The protein localises to the secreted. It catalyses the reaction Release of C-terminal Arg and Lys from a polypeptide.. Its activity is regulated as follows. TAFI/CPB2 is unique among carboxypeptidases in that it spontaneously inactivates with a short half-life, a property that is crucial for its role in controlling blood clot lysis. The zymogen is stabilized by interactions with the activation peptide. Release of the activation peptide increases a dynamic flap mobility and in time this leads to conformational changes that disrupt the catalytic site and expose a cryptic thrombin-cleavage site present at Arg-324. Cleaves C-terminal arginine or lysine residues from biologically active peptides such as kinins or anaphylatoxins in the circulation thereby regulating their activities. Down-regulates fibrinolysis by removing C-terminal lysine residues from fibrin that has already been partially degraded by plasmin. In Bos taurus (Bovine), this protein is Carboxypeptidase B2 (CPB2).